Here is a 448-residue protein sequence, read N- to C-terminus: MEVDNKRRHSEDELKQEAVKKIKSQEPNYAYLETVVREKLDFDSEKICCITLSPLNVYCCLVCGHYYQGRHEKSPAFIHSIDENHHVFLNLTSLKFYMLPQNVQILHDGEVQLLNSIKFAAYPTYCPKDLEDFPRQCFDLSNRTYLNGFIGFTNAATYDYAHSVLLLISHMVPVRDHFLLNHFDNQGEFIKRLSICVKKIWSPKLFKHHLSVDDFVSYLKVREGLNLNPIDPRLFLLWLFNKICSSSNDLKSILNHSCKGKVKIAKVENKPEASESVTGKVIVKPFWVLTLDLPEFSPFEDGNSVDDLPQINITKLLTKFTKSRSSSTSTVFELTRLPQFLIFHFNRFDRNSDHPVKNRNQTLVEFSSELEILHVKYRLKANVVHVVIKQPSTDGNAFNGDEKSHWITQLYDNKSEKWIEIDGINTTEREAELLFLKETFIQVWEKQE.

Met1 is subject to N-acetylmethionine. Residues 27 to 124 (PNYAYLETVV…NSIKFAAYPT (98 aa)) form a UBP-type; degenerate zinc finger. Zn(2+)-binding residues include Cys60, Cys63, His79, and His85. The USP domain occupies 150–447 (IGFTNAATYD…ETFIQVWEKQ (298 aa)).

As to quaternary structure, component of the 45S U1.U2.U4/U6.U5 penta-snRNP particle, a subcomplex of the spliceosome.

The protein resides in the nucleus. Promotes the assembly of newly synthesized U4 snRNA into the U4/U6 snRNP particle. Required for splicing of pre-mRNA. The polypeptide is Pre-mRNA-splicing factor SAD1 (SAD1) (Saccharomyces cerevisiae (strain ATCC 204508 / S288c) (Baker's yeast)).